A 212-amino-acid chain; its full sequence is Thylakoid membrane protein slr1949 (212 aa).

Residues 109–131 (WVQDGLLLLLALGLCGISGYRLW) traverse the membrane as a helical segment. Positions 180–212 (PNRRQRKQYETRLQALRQSAAKMKAKTQKAKAL) form a coiled coil.

The protein localises to the cellular thylakoid membrane. The polypeptide is Thylakoid membrane protein slr1949 (Synechocystis sp. (strain ATCC 27184 / PCC 6803 / Kazusa)).